The primary structure comprises 471 residues: Cysteine--tRNA ligase (471 aa).

Position 30 (C30) interacts with Zn(2+). The 'HIGH' region signature appears at 32–42 (PTVYNFAHIGN). Residues C212, H237, and E241 each coordinate Zn(2+). Positions 270 to 274 (KMSKS) match the 'KMSKS' region motif. K273 is a binding site for ATP.

The protein belongs to the class-I aminoacyl-tRNA synthetase family. In terms of assembly, monomer. Zn(2+) is required as a cofactor.

It localises to the cytoplasm. The catalysed reaction is tRNA(Cys) + L-cysteine + ATP = L-cysteinyl-tRNA(Cys) + AMP + diphosphate. The polypeptide is Cysteine--tRNA ligase (Leptospira interrogans serogroup Icterohaemorrhagiae serovar copenhageni (strain Fiocruz L1-130)).